A 182-amino-acid chain; its full sequence is UPF0200 protein Mthe_1012 (182 aa).

8-15 (GMPGSGKS) serves as a coordination point for ATP.

This sequence belongs to the UPF0200 family.

This chain is UPF0200 protein Mthe_1012, found in Methanothrix thermoacetophila (strain DSM 6194 / JCM 14653 / NBRC 101360 / PT) (Methanosaeta thermophila).